A 286-amino-acid polypeptide reads, in one-letter code: Transcription factor bHLH137 (286 aa).

Positions 63–84 (SGSEKLANTTKTATTGSSSCDQ) are enriched in polar residues. The disordered stretch occupies residues 63–149 (SGSEKLANTT…RGQATDSHSL (87 aa)). Positions 142 to 192 (QATDSHSLAERVRREKISERMRTLQNLVPGCDKVTGKALMLDEIINYVQTL) constitute a bHLH domain.

In terms of assembly, homodimer.

Its subcellular location is the nucleus. This chain is Transcription factor bHLH137 (BHLH137), found in Arabidopsis thaliana (Mouse-ear cress).